Here is a 448-residue protein sequence, read N- to C-terminus: Argininosuccinate synthase (448 aa).

Residues 17–25 (AFSGGLDTS) and Ala43 contribute to the ATP site. Tyr99 is a binding site for L-citrulline. Gly129 and Thr131 together coordinate ATP. 3 residues coordinate L-aspartate: Thr131, Asn135, and Asp136. Asn135 is a binding site for L-citrulline. ATP is bound at residue Asp136. 2 residues coordinate L-citrulline: Arg139 and Ser192. Asp194 is a binding site for ATP. Positions 201, 203, and 280 each coordinate L-citrulline.

It belongs to the argininosuccinate synthase family. Type 2 subfamily. Homotetramer.

The protein localises to the cytoplasm. It carries out the reaction L-citrulline + L-aspartate + ATP = 2-(N(omega)-L-arginino)succinate + AMP + diphosphate + H(+). Its pathway is amino-acid biosynthesis; L-arginine biosynthesis; L-arginine from L-ornithine and carbamoyl phosphate: step 2/3. This chain is Argininosuccinate synthase, found in Pectobacterium carotovorum subsp. carotovorum (strain PC1).